The primary structure comprises 180 residues: MAPGVARGPTPYWRLRLGGAALLLLLIPVAAAQEPPGAACSQNTNKTCEECLKNVSCLWCNTNKACLDYPVTSVLPPASLCKLSSARWGVCWVNFEALIITMSVVGGTLLLGIAICCCCCCRRKRSRKPDRSEEKAMREREERRIRQEERRAEMKTRHDEIRKKYGLFKEENPYARFENN.

Residues 1–32 (MAPGVARGPTPYWRLRLGGAALLLLLIPVAAA) form the signal peptide. Over 33-96 (QEPPGAACSQ…RWGVCWVNFE (64 aa)) the chain is Extracellular. In terms of domain architecture, PSI spans 39-92 (ACSQNTNKTCEECLKNVSCLWCNTNKACLDYPVTSVLPPASLCKLSSARWGVCW). N-linked (GlcNAc...) asparagine glycosylation is found at asparagine 45 and asparagine 54. Residues 97–117 (ALIITMSVVGGTLLLGIAICC) traverse the membrane as a helical segment. Over 118 to 180 (CCCCRRKRSR…ENPYARFENN (63 aa)) the chain is Cytoplasmic. A coiled-coil region spans residues 130–165 (DRSEEKAMREREERRIRQEERRAEMKTRHDEIRKKY). The tract at residues 131–157 (RSEEKAMREREERRIRQEERRAEMKTR) is disordered. Tyrosine 174 carries the post-translational modification Phosphotyrosine.

In terms of assembly, interacts with PTTG1. As to expression, ubiquitous.

It is found in the membrane. The protein resides in the cytoplasm. It localises to the nucleus. May facilitate PTTG1 nuclear translocation. The sequence is that of Pituitary tumor-transforming gene 1 protein-interacting protein (PTTG1IP) from Homo sapiens (Human).